Reading from the N-terminus, the 113-residue chain is Ribonuclease P protein component (113 aa).

The protein belongs to the RnpA family. In terms of assembly, consists of a catalytic RNA component (M1 or rnpB) and a protein subunit.

The catalysed reaction is Endonucleolytic cleavage of RNA, removing 5'-extranucleotides from tRNA precursor.. Functionally, RNaseP catalyzes the removal of the 5'-leader sequence from pre-tRNA to produce the mature 5'-terminus. It can also cleave other RNA substrates such as 4.5S RNA. The protein component plays an auxiliary but essential role in vivo by binding to the 5'-leader sequence and broadening the substrate specificity of the ribozyme. This Desulforamulus reducens (strain ATCC BAA-1160 / DSM 100696 / MI-1) (Desulfotomaculum reducens) protein is Ribonuclease P protein component.